Consider the following 552-residue polypeptide: Non-structural protein NS1 (552 aa).

Belongs to the orbivirus non-structural protein NS1 family.

In Antilocapra americana (Pronghorn), this protein is Non-structural protein NS1 (Segment-5).